The sequence spans 83 residues: Retinal cone rhodopsin-sensitive cGMP 3',5'-cyclic phosphodiesterase subunit gamma (83 aa).

Over residues 1–19 the composition is skewed to low complexity; the sequence is MSDNTTLAPPAASQAPATP. The tract at residues 1-51 is disordered; that stretch reads MSDNTTLAPPAASQAPATPRKGPPKFKQRQTRQFKSKPPKKGVKGFGDDIP. Basic residues predominate over residues 22 to 43; that stretch reads GPPKFKQRQTRQFKSKPPKKGV.

Belongs to the rod/cone cGMP-PDE gamma subunit family. Tetramer composed of two catalytic chains (alpha and beta), and two inhibitory chains (gamma).

The enzyme catalyses 3',5'-cyclic GMP + H2O = GMP + H(+). Functionally, participates in processes of transmission and amplification of the visual signal. cGMP-PDEs are the effector molecules in G-protein-mediated phototransduction in vertebrate rods and cones. The protein is Retinal cone rhodopsin-sensitive cGMP 3',5'-cyclic phosphodiesterase subunit gamma (PDE6H) of Ictidomys tridecemlineatus (Thirteen-lined ground squirrel).